The sequence spans 365 residues: Prostaglandin E2 receptor EP3 subtype (365 aa).

Topologically, residues 1 to 30 (MAGVWAPEHSVEAHSNQSSAADGCGSVSVA) are extracellular. The N-linked (GlcNAc...) asparagine glycan is linked to Asn-16. A helical membrane pass occupies residues 31–55 (FPITMMVTGFVGNALAMLLVVRSYR). The Cytoplasmic segment spans residues 56 to 68 (RRESKRKKSFLLC). The chain crosses the membrane as a helical span at residues 69 to 89 (IGWLALTDLVGQLLTSPVVIL). The Extracellular segment spans residues 90 to 108 (VYLSQRRWEQLDPSGRLCT). Cys-107 and Cys-184 form a disulfide bridge. A helical transmembrane segment spans residues 109-130 (FFGLTMTVFGLSSLLVASAMAV). At 131 to 151 (ERALAIRAPHWYASHMKTRAT) the chain is on the cytoplasmic side. A helical membrane pass occupies residues 152-173 (PVLLGVWLSVLAFALLPVLGVG). The Extracellular segment spans residues 174–203 (RYSVQWPGTWCFISTGPAGNETDSAREPGS). A glycan (N-linked (GlcNAc...) asparagine) is linked at Asn-193. Residues 204 to 229 (VAFASAFACLGLLALVVTFACNLATI) traverse the membrane as a helical segment. Over 230–259 (KALVSRCRAKAAASQSSAQWGRITTETAIQ) the chain is Cytoplasmic. The helical transmembrane segment at 260–283 (LMGIMCVLSVCWSPLLIMMLKMIF) threads the bilayer. At 284 to 303 (NQMSVEQCKTQMGKEKECNS) the chain is on the extracellular side. The chain crosses the membrane as a helical span at residues 304-325 (FLIAVRLASLNQILDPWVYLLL). The Cytoplasmic portion of the chain corresponds to 326–365 (RKILLRKFCQIRDHTNYASSSTSLPCPGSSVLMWSDQLER).

Belongs to the G-protein coupled receptor 1 family. As to quaternary structure, interacts (via C-terminus) with MKLN1. Does not interact with MKLN1. Principally expressed in the tubules of the renal medulla. Specific expression is seen in medullary and cortical thick ascending limbs; lower levels are detected in cortical and inner medullary collecting ducts. Not detected significantly in the glomeruli. In the brain, expressed in all types of glial cells.

It is found in the cell membrane. Its function is as follows. Receptor for prostaglandin E2 (PGE2). Required for normal development of fever in response to pyrinogens, including IL1B, prostaglandin E2 and bacterial lipopolysaccharide (LPS). Required for normal potentiation of platelet aggregation by prostaglandin E2, and thus plays a role in the regulation of blood coagulation. Required for increased HCO3(-) secretion in the duodenum in response to mucosal acidification, and thereby contributes to the protection of the mucosa against acid-induced ulceration. Not required for normal kidney function, normal urine volume and osmolality. Functionally, receptor for prostaglandin E2 (PGE2); ligand binding activates a signaling cascade via G(i) proteins that leads to the inhibition of adenylate cyclase. In terms of biological role, receptor for prostaglandin E2 (PGE2); ligand binding can activate several distinct signaling cascades, resulting in activation or inhibition of adenylate cyclase. This chain is Prostaglandin E2 receptor EP3 subtype (Ptger3), found in Rattus norvegicus (Rat).